A 544-amino-acid chain; its full sequence is NXPE family member 4 (544 aa).

The first 27 residues, 1–27 (MKISMINYKSLLALLFILASWIIFTVF), serve as a signal peptide directing secretion. N-linked (GlcNAc...) asparagine glycosylation is found at asparagine 29, asparagine 38, asparagine 47, asparagine 48, asparagine 92, asparagine 160, and asparagine 210.

The protein belongs to the NXPE family.

It is found in the secreted. This is NXPE family member 4 (NXPE4) from Homo sapiens (Human).